Here is a 720-residue protein sequence, read N- to C-terminus: Replication restart protein PriA (720 aa).

Residues 200–366 (ILMKNCFTSW…LHKKCFYIKF (167 aa)) form the Helicase ATP-binding domain. ATP is bound at residue 213–220 (KNNFYLKV). The short motif at 309–312 (NQEH) is the DEAH box element. Positions 425, 428, 434, 437, 452, 455, 465, and 468 each coordinate Zn(2+).

It belongs to the helicase family. PriA subfamily. Component of the replication restart primosome. Zn(2+) serves as cofactor.

It catalyses the reaction Couples ATP hydrolysis with the unwinding of duplex DNA by translocating in the 3'-5' direction.. The catalysed reaction is ATP + H2O = ADP + phosphate + H(+). Initiates the restart of stalled replication forks, which reloads the replicative helicase on sites other than the origin of replication. Recognizes and binds to abandoned replication forks and remodels them to uncover a helicase loading site. Promotes assembly of the primosome at these replication forks. The sequence is that of Replication restart protein PriA from Buchnera aphidicola subsp. Schizaphis graminum (strain Sg).